The sequence spans 128 residues: Modulator protein MzrA (128 aa).

Topologically, residues 1–11 are cytoplasmic; that stretch reads MMVMKRPSLRQ. Residues 12–32 traverse the membrane as a helical segment; sequence FSWLLGGSLLLGALFWLWLAV. Over 33–128 the chain is Periplasmic; it reads QQQEATLAIR…RLRDAPHRLG (96 aa).

It belongs to the MzrA family. In terms of assembly, interacts with EnvZ.

It localises to the cell inner membrane. In terms of biological role, modulates the activity of the EnvZ/OmpR two-component regulatory system, probably by directly modulating EnvZ enzymatic activity and increasing stability of phosphorylated OmpR. This is Modulator protein MzrA from Klebsiella pneumoniae subsp. pneumoniae (strain ATCC 700721 / MGH 78578).